A 293-amino-acid polypeptide reads, in one-letter code: Phosphatidylserine decarboxylase proenzyme (293 aa).

Active-site charge relay system; for autoendoproteolytic cleavage activity residues include D88, H144, and S247. S247 functions as the Schiff-base intermediate with substrate; via pyruvic acid; for decarboxylase activity in the catalytic mechanism. S247 carries the pyruvic acid (Ser); by autocatalysis modification.

Belongs to the phosphatidylserine decarboxylase family. PSD-B subfamily. Prokaryotic type I sub-subfamily. In terms of assembly, heterodimer of a large membrane-associated beta subunit and a small pyruvoyl-containing alpha subunit. It depends on pyruvate as a cofactor. Post-translationally, is synthesized initially as an inactive proenzyme. Formation of the active enzyme involves a self-maturation process in which the active site pyruvoyl group is generated from an internal serine residue via an autocatalytic post-translational modification. Two non-identical subunits are generated from the proenzyme in this reaction, and the pyruvate is formed at the N-terminus of the alpha chain, which is derived from the carboxyl end of the proenzyme. The autoendoproteolytic cleavage occurs by a canonical serine protease mechanism, in which the side chain hydroxyl group of the serine supplies its oxygen atom to form the C-terminus of the beta chain, while the remainder of the serine residue undergoes an oxidative deamination to produce ammonia and the pyruvoyl prosthetic group on the alpha chain. During this reaction, the Ser that is part of the protease active site of the proenzyme becomes the pyruvoyl prosthetic group, which constitutes an essential element of the active site of the mature decarboxylase.

The protein resides in the cell membrane. The catalysed reaction is a 1,2-diacyl-sn-glycero-3-phospho-L-serine + H(+) = a 1,2-diacyl-sn-glycero-3-phosphoethanolamine + CO2. Its pathway is phospholipid metabolism; phosphatidylethanolamine biosynthesis; phosphatidylethanolamine from CDP-diacylglycerol: step 2/2. Catalyzes the formation of phosphatidylethanolamine (PtdEtn) from phosphatidylserine (PtdSer). The polypeptide is Phosphatidylserine decarboxylase proenzyme (Xylella fastidiosa (strain M12)).